The sequence spans 315 residues: GTP cyclohydrolase MptA (315 aa).

It belongs to the GTP cyclohydrolase IV family. In terms of assembly, homodimer. Requires Fe(2+) as cofactor.

It carries out the reaction GTP + H2O = 7,8-dihydroneopterin 2',3'-cyclic phosphate + formate + diphosphate + H(+). It participates in cofactor biosynthesis; 5,6,7,8-tetrahydromethanopterin biosynthesis. Its function is as follows. Converts GTP to 7,8-dihydro-D-neopterin 2',3'-cyclic phosphate, the first intermediate in the biosynthesis of coenzyme methanopterin. In Methanococcus maripaludis (strain C6 / ATCC BAA-1332), this protein is GTP cyclohydrolase MptA.